Reading from the N-terminus, the 442-residue chain is Trigger factor (442 aa).

Positions 165–250 (DDRVIIDFEG…LQKVMAPELP (86 aa)) constitute a PPIase FKBP-type domain.

It belongs to the FKBP-type PPIase family. Tig subfamily.

It is found in the cytoplasm. The enzyme catalyses [protein]-peptidylproline (omega=180) = [protein]-peptidylproline (omega=0). Involved in protein export. Acts as a chaperone by maintaining the newly synthesized protein in an open conformation. Functions as a peptidyl-prolyl cis-trans isomerase. This chain is Trigger factor, found in Coxiella burnetii (strain CbuK_Q154) (Coxiella burnetii (strain Q154)).